Here is a 461-residue protein sequence, read N- to C-terminus: Cysteine--tRNA ligase (461 aa).

A Zn(2+)-binding site is contributed by cysteine 28. A 'HIGH' region motif is present at residues 30–40; sequence ITVYDLCHIGH. Residues cysteine 209, histidine 234, and glutamate 238 each coordinate Zn(2+). A 'KMSKS' region motif is present at residues 266–270; the sequence is KMSKS. Residue lysine 269 participates in ATP binding.

It belongs to the class-I aminoacyl-tRNA synthetase family. As to quaternary structure, monomer. Zn(2+) is required as a cofactor.

Its subcellular location is the cytoplasm. The enzyme catalyses tRNA(Cys) + L-cysteine + ATP = L-cysteinyl-tRNA(Cys) + AMP + diphosphate. The chain is Cysteine--tRNA ligase from Escherichia coli (strain K12 / MC4100 / BW2952).